Consider the following 282-residue polypeptide: Eukaryotic translation initiation factor 3 subunit G (282 aa).

Residues 1-27 (MSSSKSLDWADDEDYGTGLPSIQTFDN) are disordered. A phosphoserine mark is found at Ser-160 and Ser-164. One can recognise an RRM domain in the interval 202–280 (ATLRVTNLSD…LILRCEFSKP (79 aa)).

This sequence belongs to the eIF-3 subunit G family. As to quaternary structure, component of the eukaryotic translation initiation factor 3 (eIF-3) complex. The eIF-3 complex appears to include tif32/eif3a, SPAC25G10.08/eif3b, tif33/eif3c, SPBC4C3.07/eif3f, tif35/eif3g and sum1/eif3i. This set of common subunits may also associate exclusively with either moe1/eif3d and int6/eif3e, or with SPAC821.05/eif3h and SPAC1751.03/eif3m. The eIF-3 complex may also include SPAC3A12.13c/eif3j.

The protein localises to the cytoplasm. In terms of biological role, RNA-binding component of the eukaryotic translation initiation factor 3 (eIF-3) complex, which is involved in protein synthesis of a specialized repertoire of mRNAs and, together with other initiation factors, stimulates binding of mRNA and methionyl-tRNAi to the 40S ribosome. The eIF-3 complex specifically targets and initiates translation of a subset of mRNAs involved in cell proliferation. This subunit can bind 18S rRNA. The polypeptide is Eukaryotic translation initiation factor 3 subunit G (tif35) (Schizosaccharomyces pombe (strain 972 / ATCC 24843) (Fission yeast)).